A 44-amino-acid chain; its full sequence is Defensin-like peptide (44 aa).

3 cysteine pairs are disulfide-bonded: C7–C32, C18–C40, and C22–C42.

As to expression, hemolymph.

The protein localises to the secreted. Has antibacterial activity against the Gram-positive bacterium S.lutea (MIC=1.9 uM). Lacks antibacterial activity against the Gram-positive bacteria L.monocytogenes and M.luteus, and the Gram-negative bacteria E.coli D31, E.coli ATCC 25922, and S.typhimurium. Has antifungal activity against A.niger (MIC=2.9 uM), C.albicans (MIC=2.9 uM), C.fructus (MIC=2.9 uM), C.wickerhamii (MIC=2.9 uM), P.pastoris (MIC=2.9 uM), P.stiptis (MIC=2.9 uM), P.tannophilus (MIC=2.9 uM), T.harzianum (MIC=2.9 uM), and Z.marxianus (MIC=2.9 uM), but lacks antifungal activity against C.albidus, F.oxysporum, and S.cerevisiae. The polypeptide is Defensin-like peptide (Galleria mellonella (Greater wax moth)).